The primary structure comprises 417 residues: Serine hydroxymethyltransferase (417 aa).

Residues leucine 120 and 124–126 (GHL) each bind (6S)-5,6,7,8-tetrahydrofolate. Lysine 229 carries the N6-(pyridoxal phosphate)lysine modification.

The protein belongs to the SHMT family. In terms of assembly, homodimer. Requires pyridoxal 5'-phosphate as cofactor.

Its subcellular location is the cytoplasm. The enzyme catalyses (6R)-5,10-methylene-5,6,7,8-tetrahydrofolate + glycine + H2O = (6S)-5,6,7,8-tetrahydrofolate + L-serine. It participates in one-carbon metabolism; tetrahydrofolate interconversion. It functions in the pathway amino-acid biosynthesis; glycine biosynthesis; glycine from L-serine: step 1/1. Catalyzes the reversible interconversion of serine and glycine with tetrahydrofolate (THF) serving as the one-carbon carrier. This reaction serves as the major source of one-carbon groups required for the biosynthesis of purines, thymidylate, methionine, and other important biomolecules. Also exhibits THF-independent aldolase activity toward beta-hydroxyamino acids, producing glycine and aldehydes, via a retro-aldol mechanism. The chain is Serine hydroxymethyltransferase from Anaeromyxobacter sp. (strain K).